Consider the following 94-residue polypeptide: ESAT-6-like protein EsxI (94 aa).

This sequence belongs to the WXG100 family. ESAT-6 subfamily.

It is found in the secreted. In Mycobacterium tuberculosis (strain CDC 1551 / Oshkosh), this protein is ESAT-6-like protein EsxI.